We begin with the raw amino-acid sequence, 282 residues long: Kanosamine-6-phosphate phosphatase (282 aa).

The active-site Nucleophile is the aspartate 25. Aspartate 25 and aspartate 27 together coordinate Mg(2+). Lysine 209 contacts phosphate. Mg(2+) is bound by residues aspartate 232 and serine 233. Asparagine 235 lines the phosphate pocket.

This sequence belongs to the HAD-like hydrolase superfamily. Cof family. Homotetramer. The cofactor is Mg(2+).

It catalyses the reaction D-kanosamine 6-phosphate + H2O = kanosamine + phosphate. Its pathway is antibiotic biosynthesis; kanosamine biosynthesis. Functionally, involved in the biosynthesis of kanosamine (3-amino-3-deoxy-D-glucose), which is known to have antibiotic and antifungal properties, and to be a precursor of the antibiotic neotrehalosadiamine (3,3'-diamino-3,3'-dideoxy-alpha,beta-trehalose (NTD)). Catalyzes the dephosphorylation of kanosamine 6-phosphate to yield kanosamine. There is a trace amount of activity using glucosamine-6-phosphate. This chain is Kanosamine-6-phosphate phosphatase (ntdB), found in Bacillus subtilis (strain 168).